The chain runs to 142 residues: Large ribosomal subunit protein bL17 (142 aa).

This sequence belongs to the bacterial ribosomal protein bL17 family. Part of the 50S ribosomal subunit. Contacts protein L32.

The chain is Large ribosomal subunit protein bL17 from Wolbachia pipientis subsp. Culex pipiens (strain wPip).